The following is a 702-amino-acid chain: Arginine decarboxylase 1, chloroplastic (702 aa).

The N-terminal 52 residues, 1-52, are a transit peptide targeting the chloroplast; it reads MPALAFVDTPIDTFSSIFTPSSVSTAVVDGSCHWSPSLSSSLYRIDGWGAPY. Position 136 is an N6-(pyridoxal phosphate)lysine (Lys136). Pyridoxal 5'-phosphate contacts are provided by residues Ser288, Gly325, and 374 to 377; that span reads ESGR. 320–330 is a substrate binding site; sequence IDIGGGLGIDY. 436 to 437 contacts substrate; the sequence is YV. The active-site Proton donor; shared with dimeric partner is Cys524. Position 525 (Asp525) interacts with substrate. Tyr565 is a pyridoxal 5'-phosphate binding site.

This sequence belongs to the Orn/Lys/Arg decarboxylase class-II family. SpeA subfamily. Homodimer. Only the dimer is catalytically active, as the active sites are constructed of residues from both monomers. May form a head-to-tail homodimer. Homodimer and heterodimer with ADC2. The cofactor is pyridoxal 5'-phosphate. Requires Mg(2+) as cofactor.

It is found in the plastid. It localises to the chloroplast. Its subcellular location is the cytoplasm. The protein resides in the cytosol. It carries out the reaction L-arginine + H(+) = agmatine + CO2. It participates in amine and polyamine biosynthesis; agmatine biosynthesis; agmatine from L-arginine: step 1/1. In terms of biological role, required for the biosynthesis of putrescine. Catalyzes the first step of polyamine (PA) biosynthesis to produce putrescine from arginine. Is a minor contributor to basal arginine decarboxylase (ADC) activity and putrescine biosynthesis. Accumulation of putrescine plays a positive role in freezing tolerance. Production of polyamines is essential for normal seed development. Controls PA homeostasis which is crucial for normal plant growth and development. This Arabidopsis thaliana (Mouse-ear cress) protein is Arginine decarboxylase 1, chloroplastic.